Here is a 580-residue protein sequence, read N- to C-terminus: Arginine--tRNA ligase (580 aa).

The 'HIGH' region motif lies at 123–133 (PNIAKEMHVGH).

It belongs to the class-I aminoacyl-tRNA synthetase family. As to quaternary structure, monomer.

Its subcellular location is the cytoplasm. It catalyses the reaction tRNA(Arg) + L-arginine + ATP = L-arginyl-tRNA(Arg) + AMP + diphosphate. In Buchnera aphidicola subsp. Schizaphis graminum (strain Sg), this protein is Arginine--tRNA ligase (argS).